Here is a 908-residue protein sequence, read N- to C-terminus: Metabotropic glutamate receptor 8 (908 aa).

An N-terminal signal peptide occupies residues 1 to 33 (MVCEGKRSASCPCFFLLTAKFYWILTMMQRTHS). Residues 34 to 583 (QEYAHSIRVD…IIKLEWHSPW (550 aa)) are Extracellular-facing. A disulfide bond links Cys-64 and Cys-106. Asn-95 carries N-linked (GlcNAc...) asparagine glycosylation. L-glutamate contacts are provided by residues Ser-156, 177–179 (AST), and Tyr-227. 7 disulfides stabilise this stretch: Cys-246/Cys-534, Cys-369/Cys-384, Cys-424/Cys-431, Cys-516/Cys-535, Cys-520/Cys-538, Cys-541/Cys-553, and Cys-556/Cys-569. Asn-298 is a glycosylation site (N-linked (GlcNAc...) asparagine). Asp-309 is a binding site for L-glutamate. Lys-401 contributes to the L-glutamate binding site. Residues Asn-452 and Asn-480 are each glycosylated (N-linked (GlcNAc...) asparagine). The N-linked (GlcNAc...) asparagine glycan is linked to Asn-565. The helical transmembrane segment at 584 to 608 (AVVPVFVAILGIIATTFVIVTFVRY) threads the bilayer. The Cytoplasmic portion of the chain corresponds to 609–620 (NDTPIVRASGRE). The helical transmembrane segment at 621 to 641 (LSYVLLTGIFLCYSITFLMIA) threads the bilayer. Topologically, residues 642-647 (APDTII) are extracellular. The chain crosses the membrane as a helical span at residues 648–668 (CSFRRVFLGLGMCFSYAALLT). Over 669-695 (KTNRIHRIFEQGKKSVTAPKFISPASQ) the chain is Cytoplasmic. A helical transmembrane segment spans residues 696–716 (LVITFSLISVQLLGVFVWFVV). The Extracellular portion of the chain corresponds to 717 to 746 (DPPHIIIDYGEQRTLDPEKARGVLKCDISD). Residues 747 to 768 (LSLICSLGYSILLMVTCTVYAI) form a helical membrane-spanning segment. Residues 769-781 (KTRGVPETFNEAK) are Cytoplasmic-facing. The chain crosses the membrane as a helical span at residues 782–803 (PIGFTMYTTCIIWLAFIPIFFG). At 804–818 (TAQSAEKMYIQTTTL) the chain is on the extracellular side. Residues 819 to 843 (TVSMSLSASVSLGMLYMPKVYIIIF) traverse the membrane as a helical segment. The Cytoplasmic portion of the chain corresponds to 844–908 (HPEQNVQKRK…TYISYSNHSI (65 aa)). Lys-882 is covalently cross-linked (Glycyl lysine isopeptide (Lys-Gly) (interchain with G-Cter in SUMO1)).

Belongs to the G-protein coupled receptor 3 family. As to quaternary structure, interacts with PICK1.

It is found in the cell membrane. G-protein coupled receptor for glutamate. Ligand binding causes a conformation change that triggers signaling via guanine nucleotide-binding proteins (G proteins) and modulates the activity of down-stream effectors, such as adenylate cyclase. Signaling inhibits adenylate cyclase activity. The sequence is that of Metabotropic glutamate receptor 8 (GRM8) from Homo sapiens (Human).